We begin with the raw amino-acid sequence, 229 residues long: DNA mismatch repair protein MutH (229 aa).

Belongs to the MutH family.

It is found in the cytoplasm. Its function is as follows. Sequence-specific endonuclease that cleaves unmethylated GATC sequences. It is involved in DNA mismatch repair. This is DNA mismatch repair protein MutH from Escherichia coli O17:K52:H18 (strain UMN026 / ExPEC).